Reading from the N-terminus, the 319-residue chain is tRNA U34 carboxymethyltransferase (319 aa).

Carboxy-S-adenosyl-L-methionine is bound by residues Lys88, Trp102, Lys107, Gly126, 176 to 177 (LE), Met192, Tyr196, and Arg311.

Belongs to the class I-like SAM-binding methyltransferase superfamily. CmoB family. Homotetramer.

It carries out the reaction carboxy-S-adenosyl-L-methionine + 5-hydroxyuridine(34) in tRNA = 5-carboxymethoxyuridine(34) in tRNA + S-adenosyl-L-homocysteine + H(+). Catalyzes carboxymethyl transfer from carboxy-S-adenosyl-L-methionine (Cx-SAM) to 5-hydroxyuridine (ho5U) to form 5-carboxymethoxyuridine (cmo5U) at position 34 in tRNAs. The chain is tRNA U34 carboxymethyltransferase from Azotobacter vinelandii (strain DJ / ATCC BAA-1303).